The following is a 124-amino-acid chain: Small ribosomal subunit protein bS6 (124 aa).

The segment at 96-124 (ETAPSPMMKEVQREEARKAAQTTTEGQAA) is disordered. The segment covering 115–124 (AQTTTEGQAA) has biased composition (polar residues).

Belongs to the bacterial ribosomal protein bS6 family.

Functionally, binds together with bS18 to 16S ribosomal RNA. This Cupriavidus necator (strain ATCC 17699 / DSM 428 / KCTC 22496 / NCIMB 10442 / H16 / Stanier 337) (Ralstonia eutropha) protein is Small ribosomal subunit protein bS6.